A 422-amino-acid chain; its full sequence is Dihydrolipoyllysine-residue succinyltransferase component of 2-oxoglutarate dehydrogenase complex (422 aa).

Residues 1–76 (MPEVKVPELA…EVGQAIAIIG (76 aa)) enclose the Lipoyl-binding domain. Lysine 42 is modified (N6-lipoyllysine). Residues 77–184 (EGSGNASKEN…APAKEEKKYN (108 aa)) are disordered. Composition is skewed to polar residues over residues 80-94 (GNASKENSNDNTPQQ) and 116-130 (NQANDDNQQRINATP). The Peripheral subunit-binding (PSBD) domain maps to 127–163 (NATPSARRYARENGVNLAEVSPKTNDVVRKEDIDKKQ). The span at 152-163 (DVVRKEDIDKKQ) shows a compositional bias: basic and acidic residues. Low complexity predominate over residues 164–176 (QAPASTQTTQQAP). Active-site residues include histidine 393 and aspartate 397.

The protein belongs to the 2-oxoacid dehydrogenase family. In terms of assembly, forms a 24-polypeptide structural core with octahedral symmetry. Part of the 2-oxoglutarate dehydrogenase (OGDH) complex composed of E1 (2-oxoglutarate dehydrogenase), E2 (dihydrolipoamide succinyltransferase) and E3 (dihydrolipoamide dehydrogenase); the complex contains multiple copies of the three enzymatic components (E1, E2 and E3). The cofactor is (R)-lipoate.

The enzyme catalyses N(6)-[(R)-dihydrolipoyl]-L-lysyl-[protein] + succinyl-CoA = N(6)-[(R)-S(8)-succinyldihydrolipoyl]-L-lysyl-[protein] + CoA. Its pathway is amino-acid degradation; L-lysine degradation via saccharopine pathway; glutaryl-CoA from L-lysine: step 6/6. In terms of biological role, E2 component of the 2-oxoglutarate dehydrogenase (OGDH) complex which catalyzes the second step in the conversion of 2-oxoglutarate to succinyl-CoA and CO(2). This chain is Dihydrolipoyllysine-residue succinyltransferase component of 2-oxoglutarate dehydrogenase complex (odhB), found in Staphylococcus aureus (strain Mu50 / ATCC 700699).